We begin with the raw amino-acid sequence, 169 residues long: MEWLEVAKIANTHGLKGELKLLASTDFPEQRFKVGNEVFLESNGIYTPFMISSYRKHKQFIMVTFKGMQHINDVEKYKGLKLYVHPEALQELGEHEFYYHEIIGCTVFDGEDEIGVVSEILETGANDVWTIKRPGKKDVLIPYIEQVVASIDVEAKRIQITPLPGLIEG.

The PRC barrel domain maps to 93 to 166 (GEHEFYYHEI…RIQITPLPGL (74 aa)).

This sequence belongs to the RimM family. In terms of assembly, binds ribosomal protein uS19.

It localises to the cytoplasm. In terms of biological role, an accessory protein needed during the final step in the assembly of 30S ribosomal subunit, possibly for assembly of the head region. Essential for efficient processing of 16S rRNA. May be needed both before and after RbfA during the maturation of 16S rRNA. It has affinity for free ribosomal 30S subunits but not for 70S ribosomes. The sequence is that of Ribosome maturation factor RimM from Exiguobacterium sibiricum (strain DSM 17290 / CCUG 55495 / CIP 109462 / JCM 13490 / 255-15).